A 359-amino-acid chain; its full sequence is Fructose-like permease IIC component 2 (359 aa).

The PTS EIIC type-2 domain maps to 11–344; it reads TRQHLMTGVS…KSLARKNGSS (334 aa). The next 9 helical transmembrane spans lie at 19–39, 60–80, 99–119, 135–155, 176–196, 216–236, 251–271, 290–310, and 314–334; these read VSHM…SVML, IGVA…GYSI, FGAG…VVHY, IFII…WGLG, SIVM…GGPV, VAIA…ATLI, AALV…AAAD, AALV…LPVV, and LGYI…VNVL.

The protein localises to the cell inner membrane. In terms of biological role, the phosphoenolpyruvate-dependent sugar phosphotransferase system (PTS), a major carbohydrate active -transport system, catalyzes the phosphorylation of incoming sugar substrates concomitant with their translocation across the cell membrane. This chain is Fructose-like permease IIC component 2 (frwC), found in Escherichia coli (strain K12).